The chain runs to 262 residues: Phosphonates import ATP-binding protein PhnC (262 aa).

One can recognise an ABC transporter domain in the interval 5–253 (IRVEKLAKTF…RFDHLYRSIN (249 aa)). 37–44 (GPSGSGKS) contributes to the ATP binding site.

Belongs to the ABC transporter superfamily. Phosphonates importer (TC 3.A.1.9.1) family. In terms of assembly, the complex is composed of two ATP-binding proteins (PhnC), two transmembrane proteins (PhnE) and a solute-binding protein (PhnD).

It is found in the cell inner membrane. The catalysed reaction is phosphonate(out) + ATP + H2O = phosphonate(in) + ADP + phosphate + H(+). Functionally, part of the ABC transporter complex PhnCDE involved in phosphonates import. Responsible for energy coupling to the transport system. This Escherichia coli O6:H1 (strain CFT073 / ATCC 700928 / UPEC) protein is Phosphonates import ATP-binding protein PhnC.